The chain runs to 360 residues: SPRY domain-containing SOCS box protein 3 (360 aa).

A disordered region spans residues 21–54 (DQDGRSPALHAEEEAWGYDSDGQHSNSDSDTDLL). Residues 84 to 274 (SLHPFRQIKS…MKVIRSCCCR (191 aa)) form the B30.2/SPRY domain. Positions 264–315 (SMKVIRSCCCRTSLQYLCCARLRQLLPGSVDSLEVLPLPPGLKQVLSNKLGW) constitute an SOCS box domain. Residues 322–350 (NRSSQHKGDGSATTSCGSYSDSSCTPGHD) are disordered. A compositionally biased stretch (polar residues) spans 332–346 (SATTSCGSYSDSSCT).

It belongs to the SPSB family. In terms of assembly, substrate-recognition component of the ECS(SPSB3) complex, composed of spsb3, cul5, elob, elob and rnf7/rbx2.

The protein localises to the nucleus. The protein operates within protein modification; protein ubiquitination. Its function is as follows. Substrate-recognition component of a cullin-5-RING E3 ubiquitin-protein ligase complex (ECS complex, also named CRL5 complex), which mediates the ubiquitination and subsequent proteasomal degradation of target proteins. This chain is SPRY domain-containing SOCS box protein 3 (spsb3), found in Xenopus laevis (African clawed frog).